The primary structure comprises 588 residues: Calcium/calmodulin-dependent protein kinase kinase 2 (588 aa).

Residues 1–11 (MSSCVSSQPTS) are compositionally biased toward polar residues. Disordered stretches follow at residues 1-34 (MSSC…KPCE) and 64-147 (DLNL…PTVE). Ser2 bears the N-acetylserine mark. A phosphoserine mark is found at Ser99, Ser114, Ser129, Ser133, and Ser137. Polar residues predominate over residues 101–116 (QEPSQGGPASSSNSLD). Positions 124 to 139 (PSLSYSPASSPQSSPR) are enriched in low complexity. Residues 165–446 (YTLKDEIGKG…VPEIKLHPWV (282 aa)) enclose the Protein kinase domain. Residues 171 to 179 (IGKGSYGVV) and Lys194 contribute to the ATP site. An RP domain region spans residues 204–226 (QAGFPRRPPPRGARPAPGGCIQP). Residues 205-225 (AGFPRRPPPRGARPAPGGCIQ) form a disordered region. Asp312 functions as the Proton acceptor in the catalytic mechanism. The autoinhibitory domain stretch occupies residues 472-477 (ENSVKH). Residues 475 to 500 (VKHIPSLATVILVKTMIRKRSFGNPF) form a calmodulin-binding region. A phosphoserine mark is found at Ser495, Ser511, Thr522, and Ser572. Residues 497 to 588 (GNPFEGSRRE…LQPEEVMEPE (92 aa)) are disordered. Positions 521–536 (PTREWEPLSEPKEARQ) are enriched in basic and acidic residues. Over residues 570 to 580 (PGSPPRMPPLQ) the composition is skewed to pro residues.

Belongs to the protein kinase superfamily. Ser/Thr protein kinase family. In terms of assembly, interacts with calmodulin. Autophosphorylated and phosphorylated by PKA. Each isoform may show a different pattern of phosphorylation. As to expression, expressed in all tissues tested. A differential expression pattern compared to CAMKK1 is observed in the brain.

Its subcellular location is the nucleus. It is found in the cytoplasm. The protein localises to the cell projection. The protein resides in the neuron projection. The catalysed reaction is L-seryl-[protein] + ATP = O-phospho-L-seryl-[protein] + ADP + H(+). It catalyses the reaction L-threonyl-[protein] + ATP = O-phospho-L-threonyl-[protein] + ADP + H(+). Its activity is regulated as follows. Activated by Ca(2+)/calmodulin. Binding of calmodulin may relieve intrasteric autoinhibition. Autophosphorylation does not alter activity or regulation by Ca(2+)/calmodulin. In part, activity is independent on Ca(2+)/calmodulin. Functionally, calcium/calmodulin-dependent protein kinase belonging to a proposed calcium-triggered signaling cascade involved in a number of cellular processes. Phosphorylates CAMK1, CAMK4 and CAMK1D. Efficiently phosphorylates 5'-AMP-activated protein kinase (AMPK) trimer, including that consisting of PRKAA1, PRKAB1 and PRKAG1. This phosphorylation is stimulated in response to Ca(2+) signals. May play a role in neurite growth. Isoform 2 may promote neurite elongation, while isoform 1 may promoter neurite branching. May be involved in hippocampal activation of CREB1. In Mus musculus (Mouse), this protein is Calcium/calmodulin-dependent protein kinase kinase 2 (Camkk2).